A 216-amino-acid polypeptide reads, in one-letter code: Elongation factor 1-beta (216 aa).

Belongs to the EF-1-beta/EF-1-delta family. As to quaternary structure, EF-1 is composed of 4 subunits: alpha, beta, delta, and gamma. Interacts with actin.

It localises to the cytoplasm. EF-1-beta and EF-1-delta stimulate the exchange of GDP bound to EF-1-alpha to GTP. The chain is Elongation factor 1-beta (efa1B) from Dictyostelium discoideum (Social amoeba).